Reading from the N-terminus, the 232-residue chain is Large ribosomal subunit protein uL3 (232 aa).

It belongs to the universal ribosomal protein uL3 family. As to quaternary structure, part of the 50S ribosomal subunit. Forms a cluster with proteins L14 and L19.

In terms of biological role, one of the primary rRNA binding proteins, it binds directly near the 3'-end of the 23S rRNA, where it nucleates assembly of the 50S subunit. The sequence is that of Large ribosomal subunit protein uL3 from Hydrogenobaculum sp. (strain Y04AAS1).